The chain runs to 166 residues: Orofacial cleft 1 candidate gene 1 protein homolog (166 aa).

The segment at 1–22 (MDKEKFQQKAVKQTKQKKSTSA) is disordered.

This chain is Orofacial cleft 1 candidate gene 1 protein homolog (Ofcc1), found in Mus musculus (Mouse).